A 519-amino-acid polypeptide reads, in one-letter code: O-fucosyltransferase 1 (519 aa).

Topologically, residues 1–24 (MRRLGHHRLHGKTGGVGTKGMVAK) are cytoplasmic. The helical; Signal-anchor for type II membrane protein transmembrane segment at 25-45 (LSIGVIVLLICTLSLLFSANI) threads the bilayer. At 46-519 (GSNREPTRPS…TNSTVTGLER (474 aa)) the chain is on the lumenal side. Residues 67–86 (KSGGWRPSSAPRSDWPPPTK) are disordered. The N-linked (GlcNAc...) asparagine glycan is linked to asparagine 118. 260 to 262 (HLR) lines the substrate pocket. 3 N-linked (GlcNAc...) asparagine glycosylation sites follow: asparagine 327, asparagine 357, and asparagine 511. The segment at 497–519 (RLESIRDPDSTSQTNSTVTGLER) is disordered. Positions 506–519 (STSQTNSTVTGLER) are enriched in polar residues.

The protein belongs to the glycosyltransferase GT106 family.

Its subcellular location is the golgi apparatus membrane. Its pathway is glycan metabolism. The sequence is that of O-fucosyltransferase 1 from Arabidopsis thaliana (Mouse-ear cress).